A 372-amino-acid chain; its full sequence is N-methyl-L-tryptophan oxidase (372 aa).

4–34 is a binding site for FAD; that stretch reads DLIIIGSGSVGAAAGYYATRAGLNVLMTDAH. Residue Cys-308 is modified to S-8alpha-FAD cysteine.

Belongs to the MSOX/MTOX family. MTOX subfamily. As to quaternary structure, monomer. It depends on FAD as a cofactor.

The enzyme catalyses N(alpha)-methyl-L-tryptophan + O2 + H2O = L-tryptophan + formaldehyde + H2O2. In terms of biological role, catalyzes the oxidative demethylation of N-methyl-L-tryptophan. This is N-methyl-L-tryptophan oxidase from Shigella flexneri serotype 5b (strain 8401).